Here is a 1143-residue protein sequence, read N- to C-terminus: Disease resistance protein Pikm1-TS (1143 aa).

The interval 1 to 190 (MEAAAMAVTA…PLRIMGGEMQ (190 aa)) is structured coiled coil (CC) domain. The HMA domain maps to 189–258 (MQKIVFKIPM…KVGPAMFLEV (70 aa)). Residues 191 to 264 (KIVFKIPMVD…FLEVSQVKED (74 aa)) form an HMA-like domain region. Residues 282–570 (HEVKTICILG…WIAEGFVSEE (289 aa)) enclose the NB-ARC domain. LRR repeat units lie at residues 681–706 (FKRL…ICEQ), 708–731 (SLRV…MRKL), 732–754 (KHLE…IGEL), 756–777 (HLRI…IREL), 778–800 (QHLH…VGKL), 802–823 (NLKI…IGEL), 824–848 (NHLQ…QISQ), 945–968 (MPNL…INGT), 979–1002 (DSRV…EFKF), and 1004–1027 (AGPA…VFRC).

This sequence belongs to the disease resistance NB-LRR family. Interacts with AVR-Pik through its N-terminal part containing the HMA-like domain. Constitutively expressed.

Disease resistance (R) protein that specifically recognizes the AVR-Pik effector avirulence protein from M.oryzae. Resistance proteins guard the plant against pathogens that contain an appropriate avirulence protein via an indirect interaction with this avirulence protein. That triggers a defense system including the hypersensitive response, which restricts the pathogen growth. Contribution of Pikm-2 is required to recognize the effector avirulence protein AVR-Pik. In Oryza sativa subsp. japonica (Rice), this protein is Disease resistance protein Pikm1-TS.